Reading from the N-terminus, the 263-residue chain is MFVSRLAASGLLLLALMALSLDGKPVQQWSQGRPPGPPIPRLVVQQWSQGLPPGPPIPRLVVQQWSQGLPPGPPIPPLVVQQWSQGLPPRPKIPPLVVQQWSQGLPPRPKIPPLVVQKWDPPPVSPPLLLQPHESPAGGTTALREELSLGPEAASGPAAAGADGGRSGSKAPAALHRLSKSKGASATSASASRPMRDLRTDGKQARQNWARMVNPDHHAVGGCCCGGGGGGARRLKGLVKKGVAKGCFGLKLDRIGTMSGLGC.

The signal sequence occupies residues 1-23 (MFVSRLAASGLLLLALMALSLDG). Residues 24–30 (KPVQQWS) constitute a propeptide that is removed on maturation. Q31 carries the pyrrolidone carboxylic acid modification. A propeptide spanning residues 42-48 (LVVQQWS) is cleaved from the precursor. Pyrrolidone carboxylic acid is present on Q49. Residues 60-66 (LVVQQWS) constitute a propeptide that is removed on maturation. Position 67 is a pyrrolidone carboxylic acid (Q67). Positions 78-84 (LVVQQWS) are excised as a propeptide. Q85 carries the pyrrolidone carboxylic acid modification. The tract at residues 89 to 95 (PRPKIPP) is angiotensin-converting enzyme active site binding. Residues 96–102 (LVVQQWS) constitute a propeptide that is removed on maturation. Residue Q103 is modified to Pyrrolidone carboxylic acid. The interval 107-113 (PRPKIPP) is angiotensin-converting enzyme active site binding. The propeptide occupies 114 to 116 (LVV). Pyrrolidone carboxylic acid is present on Q117. Positions 128–130 (LLL) are excised as a propeptide. At Q131 the chain carries Pyrrolidone carboxylic acid. Positions 137–241 (AGGTTALREE…ARRLKGLVKK (105 aa)) are excised as a propeptide. 2 disordered regions span residues 152 to 171 (EAAS…GSKA) and 177 to 205 (RLSK…GKQA). A compositionally biased stretch (low complexity) spans 181–192 (SKGASATSASAS). Basic and acidic residues predominate over residues 194–204 (PMRDLRTDGKQ). C247 and C263 form a disulfide bridge.

This sequence in the N-terminal section; belongs to the bradykinin-potentiating peptide family. The protein in the C-terminal section; belongs to the natriuretic peptide family. In terms of tissue distribution, expressed by the venom gland.

The protein resides in the secreted. Functionally, inhibits the rabbit lung angiotensin-converting enzyme (ACE) (IC(50)=15 uM). Contracts the rat gastric fundus smooth muscle in a rapid and transient manner. In terms of biological role, causes no contraction of the rat gastric fundus smooth muscle even at high concentrations. Causes very weak contraction of the isolated guinea pig ileum. Causes weak contraction on rat uterus. Inhibits the activity of the angiotensin-converting enzyme (ACE) by a preferential interaction with its C-domain (Ki=30 nM, IC(50)=1.1 uM). It binds ACE in a zinc-independent manner. Also potentiates the hypotensive effects of bradykinin. Causes high contraction of the isolated guinea pig ileum and weak contraction on rat uterus. Its function is as follows. Inhibits the activity of the angiotensin-converting enzyme (ACE) by interacting with the same potency to its C- and N-domains. Inhibits the rabbit lung angiotensin-converting enzyme (ACE) (IC(50)=7.1 uM). Causes weak contraction of the isolated guinea pig ileum. Causes weak contraction on rat uterus. Functionally, inhibits the rabbit lung angiotensin-converting enzyme (ACE) (IC(50)=46 uM). Synthetic Leu3-blomhotin contracts the rat gastric fundus smooth muscle in a rapid and transient manner. Causes moderate contraction of the isolated guinea pig ileum. Causes weak contraction on rat uterus. In terms of biological role, causes weak contraction of the isolated guinea pig ileum. Causes about 50-fold more potentiating activity on rat uterus than on guinea pig ileum. Synthetic peptide potentiates the bradykinin in vivo. Its function is as follows. Synthetic peptide does not show any bradykinin-potentiating effects. Functionally, has a vasorelaxant activity in rat aortic strips and a diuretic potency in anesthetized rats. May act by activating natriuretic receptors (NPR1 and/or NPR2). This is Bradykinin-potentiating and C-type natriuretic peptides from Gloydius blomhoffii (Mamushi).